The primary structure comprises 191 residues: Peptidyl-tRNA hydrolase (191 aa).

Tyr17 provides a ligand contact to tRNA. His22 (proton acceptor) is an active-site residue. Residues Tyr68, Asn70, and Asn116 each contribute to the tRNA site.

The protein belongs to the PTH family. As to quaternary structure, monomer.

Its subcellular location is the cytoplasm. The enzyme catalyses an N-acyl-L-alpha-aminoacyl-tRNA + H2O = an N-acyl-L-amino acid + a tRNA + H(+). Hydrolyzes ribosome-free peptidyl-tRNAs (with 1 or more amino acids incorporated), which drop off the ribosome during protein synthesis, or as a result of ribosome stalling. In terms of biological role, catalyzes the release of premature peptidyl moieties from peptidyl-tRNA molecules trapped in stalled 50S ribosomal subunits, and thus maintains levels of free tRNAs and 50S ribosomes. The chain is Peptidyl-tRNA hydrolase from Mycobacterium avium (strain 104).